We begin with the raw amino-acid sequence, 206 residues long: Ribosomal RNA large subunit methyltransferase E (206 aa).

The S-adenosyl-L-methionine site is built by Gly60, Trp62, Asp80, Asp96, and Asp121. Residue Lys161 is the Proton acceptor of the active site.

The protein belongs to the class I-like SAM-binding methyltransferase superfamily. RNA methyltransferase RlmE family.

It localises to the cytoplasm. It carries out the reaction uridine(2552) in 23S rRNA + S-adenosyl-L-methionine = 2'-O-methyluridine(2552) in 23S rRNA + S-adenosyl-L-homocysteine + H(+). Specifically methylates the uridine in position 2552 of 23S rRNA at the 2'-O position of the ribose in the fully assembled 50S ribosomal subunit. The protein is Ribosomal RNA large subunit methyltransferase E of Legionella pneumophila (strain Lens).